A 193-amino-acid polypeptide reads, in one-letter code: dCTP deaminase (193 aa).

DCTP-binding positions include 110 to 115 (RSSLAR), Asp128, 136 to 138 (VLE), Tyr171, Lys178, and Gln182. Glu138 serves as the catalytic Proton donor/acceptor. Residues 174 to 193 (RKSAKYKDQQEAVASRISQD) form a disordered region.

It belongs to the dCTP deaminase family. Homotrimer.

It catalyses the reaction dCTP + H2O + H(+) = dUTP + NH4(+). Its pathway is pyrimidine metabolism; dUMP biosynthesis; dUMP from dCTP (dUTP route): step 1/2. In terms of biological role, catalyzes the deamination of dCTP to dUTP. This Shewanella baltica (strain OS223) protein is dCTP deaminase.